The primary structure comprises 368 residues: 1-deoxy-D-xylulose 5-phosphate reductoisomerase (368 aa).

NADPH is bound by residues T10, G11, S12, I13, Q38, and N100. 1-deoxy-D-xylulose 5-phosphate is bound at residue K101. NADPH is bound at residue E102. D125 provides a ligand contact to Mn(2+). 1-deoxy-D-xylulose 5-phosphate-binding residues include S126, E127, S151, and H172. E127 is a binding site for Mn(2+). G178 contacts NADPH. 1-deoxy-D-xylulose 5-phosphate is bound by residues S185, N190, K191, and E194. E194 serves as a coordination point for Mn(2+).

This sequence belongs to the DXR family. Mg(2+) serves as cofactor. It depends on Mn(2+) as a cofactor.

It carries out the reaction 2-C-methyl-D-erythritol 4-phosphate + NADP(+) = 1-deoxy-D-xylulose 5-phosphate + NADPH + H(+). It participates in isoprenoid biosynthesis; isopentenyl diphosphate biosynthesis via DXP pathway; isopentenyl diphosphate from 1-deoxy-D-xylulose 5-phosphate: step 1/6. Catalyzes the NADPH-dependent rearrangement and reduction of 1-deoxy-D-xylulose-5-phosphate (DXP) to 2-C-methyl-D-erythritol 4-phosphate (MEP). This Tropheryma whipplei (strain Twist) (Whipple's bacillus) protein is 1-deoxy-D-xylulose 5-phosphate reductoisomerase.